The chain runs to 381 residues: Phosphatidyl-myo-inositol mannosyltransferase (381 aa).

Residues Tyr9 and Gly16 each coordinate GDP-alpha-D-mannose. Residues Gln18, 69–70 (FN), and Arg75 each bind a 1,2-diacyl-sn-glycero-3-phospho-(1D-myo-inositol). Residues Arg204, 209 to 210 (RK), 251 to 253 (LDD), Arg256, 274 to 278 (ESFGI), and Glu282 contribute to the GDP-alpha-D-mannose site.

This sequence belongs to the glycosyltransferase group 1 family. Glycosyltransferase 4 subfamily. In terms of assembly, monomer. Mg(2+) is required as a cofactor.

It localises to the cell membrane. It carries out the reaction a 1,2-diacyl-sn-glycero-3-phospho-(1D-myo-inositol) + GDP-alpha-D-mannose = a 1,2-diacyl-sn-glycero-3-phospho-[alpha-D-mannopyranosyl-(1&lt;-&gt;6)-D-myo-inositol] + GDP + H(+). It functions in the pathway phospholipid metabolism; phosphatidylinositol metabolism. In terms of biological role, involved in the biosynthesis of phosphatidyl-myo-inositol mannosides (PIM) which are early precursors in the biosynthesis of lipomannans (LM) and lipoarabinomannans (LAM). Catalyzes the addition of a mannosyl residue from GDP-D-mannose (GDP-Man) to the position 2 of the carrier lipid phosphatidyl-myo-inositol (PI) to generate a phosphatidyl-myo-inositol bearing an alpha-1,2-linked mannose residue (PIM1). The polypeptide is Phosphatidyl-myo-inositol mannosyltransferase (Propionibacterium freudenreichii subsp. shermanii (strain ATCC 9614 / DSM 4902 / CIP 103027 / NCIMB 8099 / CIRM-BIA1)).